A 238-amino-acid polypeptide reads, in one-letter code: Ribonuclease PH (238 aa).

Residues arginine 86 and 124–126 (GTR) each bind phosphate.

It belongs to the RNase PH family. Homohexameric ring arranged as a trimer of dimers.

The enzyme catalyses tRNA(n+1) + phosphate = tRNA(n) + a ribonucleoside 5'-diphosphate. Phosphorolytic 3'-5' exoribonuclease that plays an important role in tRNA 3'-end maturation. Removes nucleotide residues following the 3'-CCA terminus of tRNAs; can also add nucleotides to the ends of RNA molecules by using nucleoside diphosphates as substrates, but this may not be physiologically important. Probably plays a role in initiation of 16S rRNA degradation (leading to ribosome degradation) during starvation. The chain is Ribonuclease PH from Serratia proteamaculans (strain 568).